We begin with the raw amino-acid sequence, 785 residues long: MTSVNLSRAPAAITRRRLQLQPEFHAECSWLKSSSKHAPLTLSCQIRPKQLSQIAELRVTSLDASQASEKDISLVQTPHKVEVNEKIEESIEYVQNLLMTSGDGRISVSPYDTAVIALIKDLKGRDAPQFPSCLEWIAHHQLADGSWGDEFFCIYDRILNTLACVVALKSWNLHSDIIEKGVTYIKENVHKLKGANVEHRTAGFELVVPTFMQMATDLGIQDLPYDHPLIKEIADTKQQRLKEIPKDLVYQMPTNLLYSLEGLGDLEWERLLKLQSGNGSFLTSPSSTAAVLMHTKDEKCLKYIENALKNCDGGAPHTYPVDIFSRLWAIDRLQRLGISRFFQHEIKYFLDHIESVWEETGVFSGRYTKFSDIDDTSMGVRLLKMHGYDVDPNVLKHFKQQDGKFSCYIGQSVESASPMYNLYRAAQLRFPGEEVLEEATKFAFNFLQEMLVKDRLQERWVISDHLFDEIKLGLKMPWYATLPRVEAAYYLDHYAGSGDVWIGKSFYRMPEISNDTYKELAILDFNRCQTQHQLEWIHMQEWYDRCSLSEFGISKRELLRSYFLAAATIFEPERTQERLLWAKTRILSKMITSFVNISGTTLSLDYNFNGLDEIISSANEDQGLAGTLLATFHQLLDGFDIYTLHQLKHVWSQWFMKVQQGEGSGGEDAVLLANTLNICAGLNEDVLSNNEYTALSTLTNKICNRLAQIQDNKILQVVDGSIKDKELEQDMQALVKLVLQENGGAVDRNIRHTFLSVSKTFYYDAYHDDETTDLHIFKVLFRPVV.

R240 is a substrate binding site. D372 and D374 together coordinate Mg(2+). The DXDD motif motif lies at 372–375 (DIDD). A substrate-binding site is contributed by R459.

Belongs to the terpene synthase family. Mg(2+) is required as a cofactor.

It is found in the plastid. It localises to the chloroplast. The catalysed reaction is (2E,6E,10E)-geranylgeranyl diphosphate + H2O = 8-hydroxycopalyl diphosphate. Its pathway is secondary metabolite biosynthesis; terpenoid biosynthesis. In terms of biological role, involved in the biosynthesis of labdane-type diterpenoid including sclareol, a diterpene-diol that is used as fragrance and flavoring, and has anticancer effects (able to kill leukemic and colon cancer cells by apoptosis). Sclareol can also be used as synthesis precursor of ambergris substitution fragance products such as ambrox. Terpene synthase that produces 8-hydroxycopalyl diphosphate from geranylgeranyl diphosphate (GGPP). This is Copal-8-ol diphosphate hydratase TPSSA3, chloroplastic from Salvia sclarea (Clary sage).